We begin with the raw amino-acid sequence, 149 residues long: Large ribosomal subunit protein uL13 (149 aa).

It belongs to the universal ribosomal protein uL13 family. In terms of assembly, part of the 50S ribosomal subunit.

Its function is as follows. This protein is one of the early assembly proteins of the 50S ribosomal subunit, although it is not seen to bind rRNA by itself. It is important during the early stages of 50S assembly. This is Large ribosomal subunit protein uL13 from Borrelia turicatae (strain 91E135).